A 362-amino-acid chain; its full sequence is Protein mom-2 (362 aa).

The first 24 residues, 1-24 (MHINTPVLLAIIYFLVFAPKSADA), serve as a signal peptide directing secretion. 5 cysteine pairs are disulfide-bonded: Cys-80–Cys-91, Cys-129–Cys-137, Cys-139–Cys-167, Cys-217–Cys-231, and Cys-219–Cys-226. Asn-90 carries N-linked (GlcNAc...) asparagine glycosylation. Residue Ser-223 is the site of O-palmitoleoyl serine; by mom-1 attachment. Residues 263–282 (TVRSSPSAGSSGRSERFARN) form a disordered region. Positions 265–274 (RSSPSAGSSG) are enriched in low complexity. Disulfide bonds link Cys-304–Cys-322, Cys-313–Cys-317, Cys-321–Cys-361, Cys-337–Cys-352, Cys-339–Cys-349, and Cys-344–Cys-345.

Belongs to the Wnt family. Post-translationally, palmitoleoylation is required for efficient binding to frizzled receptors. Depalmitoleoylation leads to Wnt signaling pathway inhibition. As to expression, expressed by anchor cell and vulva precursor cell descendants P5.ppa, P5.ppp, P7.paa and P7.pap. Expressed in the tail and weakly expressed in the vulva and body wall muscles.

It is found in the secreted. Its subcellular location is the extracellular space. The protein resides in the extracellular matrix. Its function is as follows. Ligand for members of the frizzled family of seven transmembrane receptors. Required in embryonic development for endoderm specification and the correct positioning and orientation of the mitotic spindles and division planes in blastomere cells. Involved in cleavage axis determination. Binds to receptor tyrosine kinase cam-1. Together with wnt ligand lin-44, plays a role in controlling vulva precursor cell P7.p lineage orientation during vulva development, probably by acting as a ligand for tyrosine kinase receptor lin-18. May act redundantly with other Wnt ligands such as cwn-1 and cwn-2 to control seam cell polarity. This is Protein mom-2 (mom-2) from Caenorhabditis elegans.